A 350-amino-acid polypeptide reads, in one-letter code: Protein RecA (350 aa).

67 to 74 (GPESSGKT) provides a ligand contact to ATP.

The protein belongs to the RecA family.

The protein localises to the cytoplasm. Functionally, can catalyze the hydrolysis of ATP in the presence of single-stranded DNA, the ATP-dependent uptake of single-stranded DNA by duplex DNA, and the ATP-dependent hybridization of homologous single-stranded DNAs. It interacts with LexA causing its activation and leading to its autocatalytic cleavage. This is Protein RecA from Chlamydia caviae (strain ATCC VR-813 / DSM 19441 / 03DC25 / GPIC) (Chlamydophila caviae).